Here is a 473-residue protein sequence, read N- to C-terminus: Argininosuccinate lyase (473 aa).

It belongs to the lyase 1 family. Argininosuccinate lyase subfamily.

It is found in the cytoplasm. The enzyme catalyses 2-(N(omega)-L-arginino)succinate = fumarate + L-arginine. Its pathway is amino-acid biosynthesis; L-arginine biosynthesis; L-arginine from L-ornithine and carbamoyl phosphate: step 3/3. The polypeptide is Argininosuccinate lyase (Mycobacteroides abscessus (strain ATCC 19977 / DSM 44196 / CCUG 20993 / CIP 104536 / JCM 13569 / NCTC 13031 / TMC 1543 / L948) (Mycobacterium abscessus)).